The primary structure comprises 62 residues: UPF0434 protein ASA_1553 (62 aa).

It belongs to the UPF0434 family.

The polypeptide is UPF0434 protein ASA_1553 (Aeromonas salmonicida (strain A449)).